The sequence spans 460 residues: Chromosomal replication initiator protein DnaA (460 aa).

A domain I, interacts with DnaA modulators region spans residues 1–91; sequence MNLTSPKVST…SLWQSEDKSI (91 aa). The segment at 91 to 122 is domain II; sequence IRSIDIQVIEERNSNFNVILKNREESNHNLGS. The tract at residues 123 to 342 is domain III, AAA+ region; sequence PLDPRFTFDN…GALNKVTHTS (220 aa). 4 residues coordinate ATP: glycine 169, glycine 171, lysine 172, and threonine 173. The domain IV, binds dsDNA stretch occupies residues 343 to 460; sequence LIGRSMTVES…EINRLKKMFK (118 aa).

The protein belongs to the DnaA family. Oligomerizes as a right-handed, spiral filament on DNA at oriC.

It localises to the cytoplasm. In terms of biological role, plays an essential role in the initiation and regulation of chromosomal replication. ATP-DnaA binds to the origin of replication (oriC) to initiate formation of the DNA replication initiation complex once per cell cycle. Binds the DnaA box (a 9 base pair repeat at the origin) and separates the double-stranded (ds)DNA. Forms a right-handed helical filament on oriC DNA; dsDNA binds to the exterior of the filament while single-stranded (ss)DNA is stabiized in the filament's interior. The ATP-DnaA-oriC complex binds and stabilizes one strand of the AT-rich DNA unwinding element (DUE), permitting loading of DNA polymerase. After initiation quickly degrades to an ADP-DnaA complex that is not apt for DNA replication. Binds acidic phospholipids. The sequence is that of Chromosomal replication initiator protein DnaA from Wolbachia pipientis wMel.